A 318-amino-acid polypeptide reads, in one-letter code: Basic leucine zipper (bZIP) transcription factor atfB (318 aa).

Residues 114–157 form a disordered region; it reads FNSSPPEYAPPKHRSSLSEQSQTDGYGVSTRRRKASAIDQCEQQ. The tract at residues 160–199 is basic motif; that stretch reads REKREKFLERNRLAASKCRQKKKEHTKLLETRFREVSNKK. The bZIP domain maps to 160 to 223; the sequence is REKREKFLER…LNLKNEMLRH (64 aa). A leucine-zipper region spans residues 202-216; the sequence is LESEIEHLRSEVLNL. Residues 275-301 are disordered; the sequence is DGPMQLPSEMGSPLDQRRDSEQSIMTE.

This sequence belongs to the bZIP family. ATF subfamily.

The protein resides in the nucleus. In terms of biological role, transcription factor that acts as a key player in the regulatory circuit that integrates secondary metabolism and cellular response to oxidative stress. Regulates the genes involved in development and stress response through direct binding to their promoters. Particularly involved in the resistance to oxidative stress in asexual conidiospores. The protein is Basic leucine zipper (bZIP) transcription factor atfB of Aspergillus oryzae (strain ATCC 42149 / RIB 40) (Yellow koji mold).